Consider the following 702-residue polypeptide: Putative GMC-type oxidoreductase R135 (702 aa).

The helical transmembrane segment at 55–75 threads the bilayer; the sequence is LTGDIVIIGAGAAGSLLAHYL. FAD is bound at residue 58–88; that stretch reads DIVIIGAGAAGSLLAHYLARFSNMKIILLEA. Histidine 628 is an active-site residue.

The protein belongs to the GMC oxidoreductase family. The cofactor is FAD.

It localises to the virion. The protein localises to the host membrane. In Acanthamoeba polyphaga (Amoeba), this protein is Putative GMC-type oxidoreductase R135.